Reading from the N-terminus, the 279-residue chain is Probable autolysin LDP (279 aa).

An N-terminal signal peptide occupies residues 1–24 (MKKSLTVTVSSVLAFLALNNAAHA). The LysM domain occupies 51 to 94 (TTYTVVAGDSLYKIALEHHLTLNQLYSYNPGVTPLIFPGDVISL). Residues 158–279 (VPTVPVAHNY…LNPGKYNYIH (122 aa)) enclose the Peptidase C51 domain.

The enzyme catalyses Hydrolyzes the link between N-acetylmuramoyl residues and L-amino acid residues in certain cell-wall glycopeptides.. Its function is as follows. Has weak lytic activity toward S.aureus cells. This chain is Probable autolysin LDP, found in Staphylococcus aureus (strain NCTC 8325 / PS 47).